Here is a 373-residue protein sequence, read N- to C-terminus: Dual-specificity RNA methyltransferase RlmN (373 aa).

Residue Glu-94 is the Proton acceptor of the active site. The 240-residue stretch at 100–339 (EDDRATLCVS…VIVRKTRGDD (240 aa)) folds into the Radical SAM core domain. Cys-107 and Cys-344 form a disulfide bridge. Cys-114, Cys-118, and Cys-121 together coordinate [4Fe-4S] cluster. S-adenosyl-L-methionine contacts are provided by residues 168-169 (GE), Ser-200, 222-224 (SIH), and Asn-301. Cys-344 acts as the S-methylcysteine intermediate in catalysis.

The protein belongs to the radical SAM superfamily. RlmN family. Requires [4Fe-4S] cluster as cofactor.

Its subcellular location is the cytoplasm. It carries out the reaction adenosine(2503) in 23S rRNA + 2 reduced [2Fe-2S]-[ferredoxin] + 2 S-adenosyl-L-methionine = 2-methyladenosine(2503) in 23S rRNA + 5'-deoxyadenosine + L-methionine + 2 oxidized [2Fe-2S]-[ferredoxin] + S-adenosyl-L-homocysteine. It catalyses the reaction adenosine(37) in tRNA + 2 reduced [2Fe-2S]-[ferredoxin] + 2 S-adenosyl-L-methionine = 2-methyladenosine(37) in tRNA + 5'-deoxyadenosine + L-methionine + 2 oxidized [2Fe-2S]-[ferredoxin] + S-adenosyl-L-homocysteine. Its function is as follows. Specifically methylates position 2 of adenine 2503 in 23S rRNA and position 2 of adenine 37 in tRNAs. m2A2503 modification seems to play a crucial role in the proofreading step occurring at the peptidyl transferase center and thus would serve to optimize ribosomal fidelity. This Shewanella denitrificans (strain OS217 / ATCC BAA-1090 / DSM 15013) protein is Dual-specificity RNA methyltransferase RlmN.